The chain runs to 505 residues: Probable folylpolyglutamate synthase (505 aa).

ATP is bound at residue 89-92 (GKGS). Mg(2+) contacts are provided by Ser-121, Glu-190, and His-218. ATP contacts are provided by Arg-332 and Asp-346.

Belongs to the folylpolyglutamate synthase family. A monovalent cation serves as cofactor.

It is found in the mitochondrion inner membrane. It localises to the mitochondrion matrix. The protein localises to the cytoplasm. The catalysed reaction is (6S)-5,6,7,8-tetrahydrofolyl-(gamma-L-Glu)(n) + L-glutamate + ATP = (6S)-5,6,7,8-tetrahydrofolyl-(gamma-L-Glu)(n+1) + ADP + phosphate + H(+). Its pathway is cofactor biosynthesis; tetrahydrofolylpolyglutamate biosynthesis. Functionally, catalyzes conversion of folates to polyglutamate derivatives allowing concentration of folate compounds in the cell and the intracellular retention of these cofactors, which are important substrates for most of the folate-dependent enzymes that are involved in one-carbon transfer reactions involved in purine, pyrimidine and amino acid synthesis. The sequence is that of Probable folylpolyglutamate synthase (met7) from Schizosaccharomyces pombe (strain 972 / ATCC 24843) (Fission yeast).